The following is a 142-amino-acid chain: Large ribosomal subunit protein uL13 (142 aa).

Belongs to the universal ribosomal protein uL13 family. Part of the 50S ribosomal subunit.

Its function is as follows. This protein is one of the early assembly proteins of the 50S ribosomal subunit, although it is not seen to bind rRNA by itself. It is important during the early stages of 50S assembly. The protein is Large ribosomal subunit protein uL13 of Saccharophagus degradans (strain 2-40 / ATCC 43961 / DSM 17024).